Reading from the N-terminus, the 190-residue chain is GTP cyclohydrolase 1 (190 aa).

Zn(2+) is bound by residues C80, H83, and C151.

It belongs to the GTP cyclohydrolase I family. Toroid-shaped homodecamer, composed of two pentamers of five dimers.

It carries out the reaction GTP + H2O = 7,8-dihydroneopterin 3'-triphosphate + formate + H(+). It participates in cofactor biosynthesis; 7,8-dihydroneopterin triphosphate biosynthesis; 7,8-dihydroneopterin triphosphate from GTP: step 1/1. The sequence is that of GTP cyclohydrolase 1 from Rickettsia typhi (strain ATCC VR-144 / Wilmington).